A 129-amino-acid polypeptide reads, in one-letter code: Cytochrome c oxidase subunit 5B, mitochondrial (129 aa).

The N-terminal 31 residues, 1 to 31 (MASRLLRGAGALAAQTLRARGPNGVAVVRSM), are a transit peptide targeting the mitochondrion. N6-acetyllysine is present on residues Lys-68 and Lys-86. Residues Cys-91, Cys-93, Cys-113, and Cys-116 each contribute to the Zn(2+) site. Residue Lys-121 is modified to N6-acetyllysine.

This sequence belongs to the cytochrome c oxidase subunit 5B family. As to quaternary structure, component of the cytochrome c oxidase (complex IV, CIV), a multisubunit enzyme composed of 14 subunits. The complex is composed of a catalytic core of 3 subunits MT-CO1, MT-CO2 and MT-CO3, encoded in the mitochondrial DNA, and 11 supernumerary subunits COX4I, COX5A, COX5B, COX6A, COX6B, COX6C, COX7A, COX7B, COX7C, COX8 and NDUFA4, which are encoded in the nuclear genome. The complex exists as a monomer or a dimer and forms supercomplexes (SCs) in the inner mitochondrial membrane with NADH-ubiquinone oxidoreductase (complex I, CI) and ubiquinol-cytochrome c oxidoreductase (cytochrome b-c1 complex, complex III, CIII), resulting in different assemblies (supercomplex SCI(1)III(2)IV(1) and megacomplex MCI(2)III(2)IV(2)).

It localises to the mitochondrion inner membrane. The protein operates within energy metabolism; oxidative phosphorylation. Functionally, component of the cytochrome c oxidase, the last enzyme in the mitochondrial electron transport chain which drives oxidative phosphorylation. The respiratory chain contains 3 multisubunit complexes succinate dehydrogenase (complex II, CII), ubiquinol-cytochrome c oxidoreductase (cytochrome b-c1 complex, complex III, CIII) and cytochrome c oxidase (complex IV, CIV), that cooperate to transfer electrons derived from NADH and succinate to molecular oxygen, creating an electrochemical gradient over the inner membrane that drives transmembrane transport and the ATP synthase. Cytochrome c oxidase is the component of the respiratory chain that catalyzes the reduction of oxygen to water. Electrons originating from reduced cytochrome c in the intermembrane space (IMS) are transferred via the dinuclear copper A center (CU(A)) of subunit 2 and heme A of subunit 1 to the active site in subunit 1, a binuclear center (BNC) formed by heme A3 and copper B (CU(B)). The BNC reduces molecular oxygen to 2 water molecules using 4 electrons from cytochrome c in the IMS and 4 protons from the mitochondrial matrix. This is Cytochrome c oxidase subunit 5B, mitochondrial (COX5B) from Sus scrofa (Pig).